We begin with the raw amino-acid sequence, 52 residues long: Conotoxin Cal6.25 (52 aa).

Residues 1–22 (MKLTHVLIVAVLVLTVCHLTMA) form the signal peptide. 3 cysteine pairs are disulfide-bonded: C24/C41, C31/C45, and C40/C50.

In terms of tissue distribution, expressed by the venom duct.

The protein localises to the secreted. Its function is as follows. Probable neurotoxin. This Californiconus californicus (California cone) protein is Conotoxin Cal6.25.